The chain runs to 245 residues: Thiamine phosphate phosphatase-like protein (245 aa).

The Nucleophile role is filled by aspartate 9. Residues aspartate 9, aspartate 11, and aspartate 179 each coordinate Mg(2+). Aspartate 11 acts as the Proton donor in catalysis.

This sequence belongs to the HAD-like hydrolase superfamily. Monomer. Mg(2+) is required as a cofactor.

It catalyses the reaction thiamine phosphate + H2O = thiamine + phosphate. HAD-like hydrolase that has a thiamine monophosphate phosphatase activity in a heterologous system. Does not contribute to thiamine monophosphate phosphatase activity in planta. The protein is Thiamine phosphate phosphatase-like protein of Arabidopsis thaliana (Mouse-ear cress).